A 468-amino-acid polypeptide reads, in one-letter code: Phosphomethylpyrimidine synthase (468 aa).

Substrate is bound by residues Asn-80, Met-109, Tyr-138, His-173, 193–195, 234–237, and Glu-273; these read SRG and DGLR. A Zn(2+)-binding site is contributed by His-277. Tyr-300 is a binding site for substrate. A Zn(2+)-binding site is contributed by His-341. Residues Cys-421, Cys-424, and Cys-429 each coordinate [4Fe-4S] cluster.

Belongs to the ThiC family. In terms of assembly, homodimer. The cofactor is [4Fe-4S] cluster.

The enzyme catalyses 5-amino-1-(5-phospho-beta-D-ribosyl)imidazole + S-adenosyl-L-methionine = 4-amino-2-methyl-5-(phosphooxymethyl)pyrimidine + CO + 5'-deoxyadenosine + formate + L-methionine + 3 H(+). It participates in cofactor biosynthesis; thiamine diphosphate biosynthesis. Its function is as follows. Catalyzes the synthesis of the hydroxymethylpyrimidine phosphate (HMP-P) moiety of thiamine from aminoimidazole ribotide (AIR) in a radical S-adenosyl-L-methionine (SAM)-dependent reaction. This chain is Phosphomethylpyrimidine synthase, found in Anaeromyxobacter sp. (strain Fw109-5).